We begin with the raw amino-acid sequence, 257 residues long: OCIA domain-containing protein 1 (257 aa).

2 disordered regions span residues 1-20 and 148-257; these read MDSP…PHPL and YSDE…SWTD. Residues 1–110 form the OCIA domain; sequence MDSPLNDGSH…MRLPNSHLGE (110 aa). Residues 156 to 170 show a composition bias toward polar residues; the sequence is GRSTSLNLDTESRPT. Positions 204-216 are enriched in basic and acidic residues; it reads EDLRRRNREEYSK.

Belongs to the OCIAD1 family. As to quaternary structure, interacts with STAT3 and ARF1. As to expression, expressed in all cells of the primary lymph gland lobe.

It localises to the endosome. In terms of biological role, maintains stem cell potency. Involved in endocytic pathways that mediate signaling during hematopoiesis. The sequence is that of OCIA domain-containing protein 1 (asrij) from Drosophila melanogaster (Fruit fly).